A 200-amino-acid polypeptide reads, in one-letter code: Imidazole glycerol phosphate synthase subunit HisH (200 aa).

In terms of domain architecture, Glutamine amidotransferase type-1 spans 3–200; the sequence is DVALIDAGGA…LHNFLEMSFP (198 aa). The active-site Nucleophile is Cys-78. Residues His-179 and Glu-181 contribute to the active site.

In terms of assembly, heterodimer of HisH and HisF.

The protein localises to the cytoplasm. It catalyses the reaction 5-[(5-phospho-1-deoxy-D-ribulos-1-ylimino)methylamino]-1-(5-phospho-beta-D-ribosyl)imidazole-4-carboxamide + L-glutamine = D-erythro-1-(imidazol-4-yl)glycerol 3-phosphate + 5-amino-1-(5-phospho-beta-D-ribosyl)imidazole-4-carboxamide + L-glutamate + H(+). The enzyme catalyses L-glutamine + H2O = L-glutamate + NH4(+). The protein operates within amino-acid biosynthesis; L-histidine biosynthesis; L-histidine from 5-phospho-alpha-D-ribose 1-diphosphate: step 5/9. Functionally, IGPS catalyzes the conversion of PRFAR and glutamine to IGP, AICAR and glutamate. The HisH subunit catalyzes the hydrolysis of glutamine to glutamate and ammonia as part of the synthesis of IGP and AICAR. The resulting ammonia molecule is channeled to the active site of HisF. The sequence is that of Imidazole glycerol phosphate synthase subunit HisH from Xanthomonas oryzae pv. oryzae (strain MAFF 311018).